Here is a 317-residue protein sequence, read N- to C-terminus: Transcriptional regulator LsrR (317 aa).

The segment at residues 33–56 (QSEISDRLGLTRLKVSRLLEKGHQ) is a DNA-binding region (H-T-H motif).

The protein belongs to the SorC transcriptional regulatory family.

It localises to the cytoplasm. Its activity is regulated as follows. Inactivated by phosphorylated autoinducer-2 (phospho-AI-2). Phospho-AI-2 acts by binding to LsrR, which is then unable to bind to the promoter regions, allowing the transcription of the target genes. Transcriptional regulator that represses the expression of the lsr operon in the absence of the quorum-sensing signaling molecule autoinducer 2 (AI-2). It also represses the expression of the lsrRK operon. Acts by binding directly to the lsrA and lsrR promoter regions. In the presence of phosphorylated autoinducer-2 (phospho-AI-2), LsrR is inactivated, leading to the transcription of the genes. The polypeptide is Transcriptional regulator LsrR (lsrR) (Escherichia coli (strain K12 / DH10B)).